We begin with the raw amino-acid sequence, 452 residues long: uncharacterized protein (452 aa).

It is found in the cytoplasm. The protein resides in the nucleus. This is an uncharacterized protein from Schizosaccharomyces pombe (strain 972 / ATCC 24843) (Fission yeast).